Consider the following 234-residue polypeptide: UstYa family oxidase phomYd' (234 aa).

The interval 1-26 is disordered; it reads MEKFFSPSRHNYADLSPTDVPASEES. Residues 47–69 traverse the membrane as a helical segment; it reads VLVNRLLAASTVALVMVSLWLGW. An HXXHC 1 motif is present at residues 151-155; the sequence is HWDHC. Asn208 carries an N-linked (GlcNAc...) asparagine glycan.

Belongs to the ustYa family.

The protein resides in the membrane. Its pathway is mycotoxin biosynthesis. In terms of biological role, ustYa family oxidase; part of the gene cluster that mediates the biosynthesis of the phomopsins, a group of hexapeptide mycotoxins which infects lupins and causes lupinosis disease in livestock. Within the pathway, phomYd' catalyzes the desaturation of the Asp moiety into 2,3-dehydroaspartic acid (dAsp). The pathway starts with the processing of the precursor phomA' by several endopeptidases including kexin proteases as well as the cluster-specific S41 family peptidase phomP1 and the oligopeptidase phomG' to produce 10 identical copies of the hexapeptide Tyr-Val-Ile-Pro-Ile-Asp. After being excised from the precursor peptide, the core peptides are cyclized and modified post-translationally by enzymes encoded within the gene cluster. The timing and order of proteolysis of the phomA' precursor and PTMs are still unknown. Two tyrosinase-like enzymes, phomQ1' and phomQ2, catalyze the chlorination and hydroxylation of Tyr, respectively. PhomYb, is proposed to be involved in the construction of the macrocyclic structure. The other 4 ustYa family proteins may be involved in PTMs that generate the unique structure of phomopsin A. PhomYa' is required for the hydroxylation of C-beta of Tyr. PhomYc', phomYd', and phomYe are responsible for the biosynthesis of 2,3-dehydroisoleucine (dIle), 2,3-dehydroaspartic acid (dAsp), and 3,4-dehydroproline (dPro), respectively. While dIle formation by phomYc' is indispensable for the installation of dAsp by phomYd', the order of the other PTMs have not been elucidated yet. Most of the biosynthetic enzymes likely have broad substrate specificity, and thus, there might be a metabolic grid from a precursor to phomopsin A. The enzyme(s) responsible for the biosynthesis of 3,4-dehydrovaline (dVal) have also not been identified yet. Finally, phomM' acts as an S-adenosylmethionine-dependent alpha-N-methyltransferase that catalyzes two successive N-methylation reactions, converting N-desmethyl-phomopsin A to phomopsin A and phomopsin A further to an N,N-dimethylated congener called phomopsin E. The polypeptide is UstYa family oxidase phomYd' (Diaporthe leptostromiformis (Lupinosis disease fungus)).